Consider the following 432-residue polypeptide: Adenylosuccinate synthetase (432 aa).

GTP-binding positions include 13–19 (GDEGKGK) and 41–43 (GHT). Catalysis depends on aspartate 14, which acts as the Proton acceptor. Mg(2+) contacts are provided by aspartate 14 and glycine 41. IMP-binding positions include 14–17 (DEGK), 39–42 (NAGH), threonine 130, arginine 144, glutamine 225, threonine 240, and arginine 304. The active-site Proton donor is the histidine 42. 300-306 (ATTGRKR) lines the substrate pocket. Residues arginine 306, 332 to 334 (KLD), and 415 to 417 (STG) contribute to the GTP site.

The protein belongs to the adenylosuccinate synthetase family. In terms of assembly, homodimer. Mg(2+) serves as cofactor.

The protein resides in the cytoplasm. The catalysed reaction is IMP + L-aspartate + GTP = N(6)-(1,2-dicarboxyethyl)-AMP + GDP + phosphate + 2 H(+). It participates in purine metabolism; AMP biosynthesis via de novo pathway; AMP from IMP: step 1/2. Its function is as follows. Plays an important role in the de novo pathway of purine nucleotide biosynthesis. Catalyzes the first committed step in the biosynthesis of AMP from IMP. This chain is Adenylosuccinate synthetase, found in Alteromonas mediterranea (strain DSM 17117 / CIP 110805 / LMG 28347 / Deep ecotype).